Consider the following 130-residue polypeptide: uncharacterized protein (130 aa).

A helical transmembrane segment spans residues 15–31 (LYLCPAIIRLSSVCTLA).

The protein resides in the membrane. This is an uncharacterized protein from Saccharomyces cerevisiae (strain ATCC 204508 / S288c) (Baker's yeast).